We begin with the raw amino-acid sequence, 119 residues long: Beta-2-microglobulin (119 aa).

An N-terminal signal peptide occupies residues 1-20; the sequence is MARFVVVPLLVLVSLFGLEA. The region spanning 25–114 is the Ig-like C1-type domain; the sequence is PKIQVYSRYP…VTFSTPKTVK (90 aa). Cys-45 and Cys-100 are disulfide-bonded.

This sequence belongs to the beta-2-microglobulin family. As to quaternary structure, heterodimer of an alpha chain and a beta chain. Beta-2-microglobulin is the beta-chain of major histocompatibility complex class I molecules.

It localises to the secreted. Component of the class I major histocompatibility complex (MHC). Involved in the presentation of peptide antigens to the immune system. The protein is Beta-2-microglobulin (B2M) of Saguinus oedipus (Cotton-top tamarin).